A 273-amino-acid chain; its full sequence is Flagellin FljK (273 aa).

This sequence belongs to the bacterial flagellin family. In terms of assembly, in C.crescentus, the flagellar filament is composed of multiple flagellins of 29 kDa; 27 kDa and 25 kDa.

Its subcellular location is the secreted. It localises to the bacterial flagellum. Its function is as follows. Flagellin is the subunit protein which polymerizes to form the filaments of bacterial flagella. This is Flagellin FljK (fljK) from Caulobacter vibrioides (strain ATCC 19089 / CIP 103742 / CB 15) (Caulobacter crescentus).